A 110-amino-acid chain; its full sequence is DNA-directed RNA polymerase subunit omega (110 aa).

Belongs to the RNA polymerase subunit omega family. The RNAP catalytic core consists of 2 alpha, 1 beta, 1 beta' and 1 omega subunit. When a sigma factor is associated with the core the holoenzyme is formed, which can initiate transcription.

It catalyses the reaction RNA(n) + a ribonucleoside 5'-triphosphate = RNA(n+1) + diphosphate. Its function is as follows. Promotes RNA polymerase assembly. Latches the N- and C-terminal regions of the beta' subunit thereby facilitating its interaction with the beta and alpha subunits. This Nocardioides sp. (strain ATCC BAA-499 / JS614) protein is DNA-directed RNA polymerase subunit omega.